The primary structure comprises 211 residues: Protein-methionine-sulfoxide reductase heme-binding subunit MsrQ (211 aa).

6 helical membrane-spanning segments follow: residues 10-30 (WLKV…VWAI), 54-74 (FLLA…PLLI), 82-102 (LWCF…ELGV), 116-136 (PYLT…FTST), 153-173 (FVYL…KIIS), and 178-198 (IYAG…LSLF).

This sequence belongs to the MsrQ family. As to quaternary structure, heterodimer of a catalytic subunit (MsrP) and a heme-binding subunit (MsrQ). Requires FMN as cofactor. Heme b serves as cofactor.

The protein localises to the cell inner membrane. Part of the MsrPQ system that repairs oxidized periplasmic proteins containing methionine sulfoxide residues (Met-O), using respiratory chain electrons. Thus protects these proteins from oxidative-stress damage caused by reactive species of oxygen and chlorine generated by the host defense mechanisms. MsrPQ is essential for the maintenance of envelope integrity under bleach stress, rescuing a wide series of structurally unrelated periplasmic proteins from methionine oxidation, including the primary periplasmic chaperone SurA and the lipoprotein Pal. MsrQ provides electrons for reduction to the reductase catalytic subunit MsrP, using the quinone pool of the respiratory chain. This chain is Protein-methionine-sulfoxide reductase heme-binding subunit MsrQ, found in Escherichia coli O6:H1 (strain CFT073 / ATCC 700928 / UPEC).